We begin with the raw amino-acid sequence, 177 residues long: ATP synthase subunit delta 1 (177 aa).

The protein belongs to the ATPase delta chain family. In terms of assembly, F-type ATPases have 2 components, F(1) - the catalytic core - and F(0) - the membrane proton channel. F(1) has five subunits: alpha(3), beta(3), gamma(1), delta(1), epsilon(1). F(0) has three main subunits: a(1), b(2) and c(10-14). The alpha and beta chains form an alternating ring which encloses part of the gamma chain. F(1) is attached to F(0) by a central stalk formed by the gamma and epsilon chains, while a peripheral stalk is formed by the delta and b chains.

It is found in the cell inner membrane. Functionally, f(1)F(0) ATP synthase produces ATP from ADP in the presence of a proton or sodium gradient. F-type ATPases consist of two structural domains, F(1) containing the extramembraneous catalytic core and F(0) containing the membrane proton channel, linked together by a central stalk and a peripheral stalk. During catalysis, ATP synthesis in the catalytic domain of F(1) is coupled via a rotary mechanism of the central stalk subunits to proton translocation. This protein is part of the stalk that links CF(0) to CF(1). It either transmits conformational changes from CF(0) to CF(1) or is implicated in proton conduction. The chain is ATP synthase subunit delta 1 from Photobacterium profundum (strain SS9).